The sequence spans 244 residues: Chaperone protein FimB/FhaD (244 aa).

A signal peptide spans 1 to 24 (MARWRRRLGVAALGAAMLASLAPA).

Belongs to the periplasmic pilus chaperone family.

Its subcellular location is the periplasm. In terms of biological role, required for the biogenesis of the filamentous hemagglutinin and the fimbria. This chain is Chaperone protein FimB/FhaD (fimB), found in Bordetella pertussis (strain Tohama I / ATCC BAA-589 / NCTC 13251).